The primary structure comprises 643 residues: tRNA 5-methylaminomethyl-2-thiouridine biosynthesis bifunctional protein MnmC (643 aa).

Residues 1–223 are tRNA (mnm(5)s(2)U34)-methyltransferase; the sequence is MPDRLVSATL…VDDRLVGDYA (223 aa). The interval 247 to 643 is FAD-dependent cmnm(5)s(2)U34 oxidoreductase; it reads IGAGLAGCAV…LRARRVGSAG (397 aa).

It in the N-terminal section; belongs to the methyltransferase superfamily. tRNA (mnm(5)s(2)U34)-methyltransferase family. The protein in the C-terminal section; belongs to the DAO family. FAD serves as cofactor.

Its subcellular location is the cytoplasm. The enzyme catalyses 5-aminomethyl-2-thiouridine(34) in tRNA + S-adenosyl-L-methionine = 5-methylaminomethyl-2-thiouridine(34) in tRNA + S-adenosyl-L-homocysteine + H(+). In terms of biological role, catalyzes the last two steps in the biosynthesis of 5-methylaminomethyl-2-thiouridine (mnm(5)s(2)U) at the wobble position (U34) in tRNA. Catalyzes the FAD-dependent demodification of cmnm(5)s(2)U34 to nm(5)s(2)U34, followed by the transfer of a methyl group from S-adenosyl-L-methionine to nm(5)s(2)U34, to form mnm(5)s(2)U34. This is tRNA 5-methylaminomethyl-2-thiouridine biosynthesis bifunctional protein MnmC from Burkholderia cenocepacia (strain HI2424).